We begin with the raw amino-acid sequence, 250 residues long: Acetoacetate decarboxylase 1 (250 aa).

The active-site Schiff-base intermediate with acetoacetate is the K120.

This sequence belongs to the ADC family.

It catalyses the reaction acetoacetate + H(+) = acetone + CO2. In terms of biological role, catalyzes the conversion of acetoacetate to acetone and carbon dioxide. In Bradyrhizobium diazoefficiens (strain JCM 10833 / BCRC 13528 / IAM 13628 / NBRC 14792 / USDA 110), this protein is Acetoacetate decarboxylase 1.